Reading from the N-terminus, the 98-residue chain is Feather keratin 3 (98 aa).

The protein belongs to the avian keratin family. As to quaternary structure, the avian keratins (F-ker, S-ker, C-ker and B-ker) are a complex mixture of very similar polypeptides.

The protein is Feather keratin 3 of Gallus gallus (Chicken).